The following is a 474-amino-acid chain: uncharacterized protein (474 aa).

Positions 1–23 are cleaved as a signal peptide; that stretch reads MLRRYLTLSFSSLLLLALLFLTG. Cys24 carries N-palmitoyl cysteine lipidation. The S-diacylglycerol cysteine moiety is linked to residue Cys24.

This sequence belongs to the MG067/MG068/MG395 family.

The protein resides in the cell membrane. This is an uncharacterized protein from Mycoplasma genitalium (strain ATCC 33530 / DSM 19775 / NCTC 10195 / G37) (Mycoplasmoides genitalium).